Consider the following 315-residue polypeptide: beta-hydroxyaspartate dehydratase (315 aa).

Lys53 carries the post-translational modification N6-(pyridoxal phosphate)lysine. Residues Asn80, 179 to 183 (GGGGM), and Thr303 each bind pyridoxal 5'-phosphate.

Requires pyridoxal 5'-phosphate as cofactor.

It carries out the reaction (3S)-3-hydroxy-D-aspartate = iminosuccinate + H2O. Its function is as follows. Catalyzes the dehydration of (2R,3S)-beta-hydroxyaspartate ((3S)-3-hydroxy-D-aspartate) into iminosuccinate. Is essential for the growth of P.denitrificans in the presence of glycolate and glyoxylate since it functions in glyoxylate assimilation via the beta-hydroxyaspartate cycle (BHAC). The sequence is that of beta-hydroxyaspartate dehydratase from Paracoccus denitrificans (strain Pd 1222).